We begin with the raw amino-acid sequence, 238 residues long: MKRRLLAAGCAMLLLSGCNAARQQPSPVPPVTQPQAYAEPEDTAANPGSLYSESDSEFLFSDNRARRVGDIVLVKVVETDKAKNKADTTADKTSTNELGVSAFFGQSSASINPINPAGPFSGAVGANPILGTSSTSKHSATGETKRESTVTTTIAARVLRVLPGGLMEVEGARETRVNDETQYIVVSGLVRARDVSSDNSVTSSQMANARIEYYGKGTLADKQKPGWFTRLMDNVWPF.

The signal sequence occupies residues 1–17 (MKRRLLAAGCAMLLLSG). C18 carries the N-palmitoyl cysteine lipid modification. A lipid anchor (S-diacylglycerol cysteine) is attached at C18. The disordered stretch occupies residues 22 to 50 (RQQPSPVPPVTQPQAYAEPEDTAANPGSL).

Belongs to the FlgH family. In terms of assembly, the basal body constitutes a major portion of the flagellar organelle and consists of four rings (L,P,S, and M) mounted on a central rod.

Its subcellular location is the cell outer membrane. It localises to the bacterial flagellum basal body. Functionally, assembles around the rod to form the L-ring and probably protects the motor/basal body from shearing forces during rotation. The sequence is that of Flagellar L-ring protein from Nitratidesulfovibrio vulgaris (strain DSM 19637 / Miyazaki F) (Desulfovibrio vulgaris).